The sequence spans 87 residues: Small ribosomal subunit protein bS20 (87 aa).

The protein belongs to the bacterial ribosomal protein bS20 family.

Its function is as follows. Binds directly to 16S ribosomal RNA. The protein is Small ribosomal subunit protein bS20 of Rickettsia bellii (strain OSU 85-389).